A 198-amino-acid chain; its full sequence is HTH-type transcriptional regulator BetI (198 aa).

The region spanning 8 to 68 is the HTH tetR-type domain; that stretch reads PLRRRELIDA…ATMRHLLREL (61 aa). Positions 31-50 form a DNA-binding region, H-T-H motif; it reads TVAQIAHEAGVSPALAHHYF.

It participates in amine and polyamine biosynthesis; betaine biosynthesis via choline pathway [regulation]. Its function is as follows. Repressor involved in the biosynthesis of the osmoprotectant glycine betaine. It represses transcription of the choline transporter BetT and the genes of BetAB involved in the synthesis of glycine betaine. The polypeptide is HTH-type transcriptional regulator BetI (Brucella abortus (strain 2308)).